Reading from the N-terminus, the 370-residue chain is Alpha-ketoglutarate-dependent xanthine dioxygenase xanA (370 aa).

Position 107 (H107) interacts with substrate. H149 and D151 together coordinate Fe cation. The 2-oxoglutarate site is built by T195 and W325. A Fe cation-binding site is contributed by H340. R352 is a binding site for 2-oxoglutarate.

Belongs to the TfdA dioxygenase family. Fe(2+) is required as a cofactor. Glycosylated. Is subject to both N- and O-linked glycosylation. Post-translationally, phosphorylated.

It is found in the cytoplasm. The protein resides in the cytosol. It carries out the reaction xanthine + 2-oxoglutarate + O2 = urate + succinate + CO2. Its activity is regulated as follows. Cu(2+) and Zn(2+) completely inhibit the xanthine dioxygenase activity, whereas Co(2+), Mn(2+), and Ni(2+) partially inhibit the activity. The inactive metal ions are presumed to compete for the Fe(2+)-binding site. N-oxalylglycine (NOG), a known inhibitor of several Fe(2+)/alpha-ketoglutarate-dependent dioxygenase family members, competes with alpha-ketoglutarate and provides a Ki of 0.12 uM for inhibition. 6,8-dihydroxypurine acts as a slow-binding competitive inhibitor. The thiol-specific inhibitors 5,5'-dithiobis(2-nitrobenzoic acid) (DTNB) and iodoacetamide, inhibit also the catalytic activity. Functionally, alpha-ketoglutarate-dependent xanthine dioxygenase is a non-heme mononuclear Fe(2+) enzyme that decarboxylates alpha-ketoglutarate to succinate and CO(2) while hydroxylating xanthine to generate uric acid. Allows xanthine utilization as a nitrogen source. Whereas xanA is highly specific for xanthine, alpha-ketoadipic acid can replace alpha-ketoglutarate as a cosubstrate. Exhibits ferroxidase activity in the absence of substrates. The sequence is that of Alpha-ketoglutarate-dependent xanthine dioxygenase xanA from Emericella nidulans (Aspergillus nidulans).